A 552-amino-acid polypeptide reads, in one-letter code: Probable beta-glucosidase btgE (552 aa).

Residues 1–18 form the signal peptide; sequence MRGAILATAAALAGTAMA. Positions 250–291 are disordered; that stretch reads EPTSAPAAPSTTAVPATTTAAVPSTSSAAPSSSSTAPASTGA. Positions 251-289 are enriched in low complexity; that stretch reads PTSAPAAPSTTAVPATTTAAVPSTSSAAPSSSSTAPAST. The Proton donor role is filled by E392. Residue E488 is the Nucleophile of the active site.

It belongs to the glycosyl hydrolase 17 family.

The protein localises to the secreted. The protein resides in the cell wall. It catalyses the reaction Hydrolysis of terminal, non-reducing beta-D-glucosyl residues with release of beta-D-glucose.. The protein operates within glycan metabolism; cellulose degradation. In terms of biological role, beta-glucosidases are one of a number of cellulolytic enzymes involved in the degradation of cellulosic biomass. Catalyzes the last step releasing glucose from the inhibitory cellobiose. This is Probable beta-glucosidase btgE (btgE) from Neosartorya fischeri (strain ATCC 1020 / DSM 3700 / CBS 544.65 / FGSC A1164 / JCM 1740 / NRRL 181 / WB 181) (Aspergillus fischerianus).